Here is a 354-residue protein sequence, read N- to C-terminus: tRNA N6-adenosine threonylcarbamoyltransferase (354 aa).

Fe cation-binding residues include His-115 and His-119. Substrate contacts are provided by residues 138–142, Asp-171, Gly-184, and Asn-276; that span reads LVSGG. Asp-304 lines the Fe cation pocket.

It belongs to the KAE1 / TsaD family. Fe(2+) is required as a cofactor.

It is found in the cytoplasm. The catalysed reaction is L-threonylcarbamoyladenylate + adenosine(37) in tRNA = N(6)-L-threonylcarbamoyladenosine(37) in tRNA + AMP + H(+). In terms of biological role, required for the formation of a threonylcarbamoyl group on adenosine at position 37 (t(6)A37) in tRNAs that read codons beginning with adenine. Is involved in the transfer of the threonylcarbamoyl moiety of threonylcarbamoyl-AMP (TC-AMP) to the N6 group of A37, together with TsaE and TsaB. TsaD likely plays a direct catalytic role in this reaction. The polypeptide is tRNA N6-adenosine threonylcarbamoyltransferase (Xanthomonas campestris pv. campestris (strain 8004)).